Reading from the N-terminus, the 156-residue chain is WASQVSENRPVCKAIIQGKQFEGLVDTGADVSIIALNQWPKNWPKQKAVTGLVGIGTASEVYQSMEILHCLGPDNQESTVQPMITSIPLNLWGRDLLQQWGAEITMPAPLYSPTSQKIMTKMGYIPGKGLGKNEDGIKVPVEAKINQEREGIGYPF.

The 76-residue stretch at 21–96 folds into the Peptidase A2 domain; that stretch reads FEGLVDTGAD…IPLNLWGRDL (76 aa). Residue Asp-26 is part of the active site. Residues 111–156 form the G-patch domain; it reads YSPTSQKIMTKMGYIPGKGLGKNEDGIKVPVEAKINQEREGIGYPF.

The protein belongs to the peptidase A2 family. HERV class-II K(HML-2) subfamily. In terms of assembly, active as a homodimer. Post-translationally, autoproteolytically processed at the N-terminus. Expected C-terminal autoprocessing not detected. The sequence shown is that of the processed Pro protein.

It catalyses the reaction Processing at the authentic HIV-1 PR recognition site and release of the mature p17 matrix and the p24 capsid protein, as a result of the cleavage of the -SQNY-|-PIVQ- cleavage site.. Resistant to a number of clinically useful HIV-1 PR inhibitors. Inhibited by cyclic urea SD146. Functionally, retroviral proteases have roles in processing of the primary translation products and the maturation of the viral particle. Endogenous Pro proteins may have kept, lost or modified their original function during evolution. This endogenous protein has retained most of the characteristics of retroviral proteases. The sequence is that of Endogenous retrovirus group K member 10 Pro protein (ERVK-10) from Homo sapiens (Human).